We begin with the raw amino-acid sequence, 250 residues long: Acetylglutamate kinase (250 aa).

Residues 41–42 (GG), Arg-63, and Asn-156 contribute to the substrate site.

Belongs to the acetylglutamate kinase family. ArgB subfamily.

It is found in the cytoplasm. The enzyme catalyses N-acetyl-L-glutamate + ATP = N-acetyl-L-glutamyl 5-phosphate + ADP. The protein operates within amino-acid biosynthesis; L-arginine biosynthesis; N(2)-acetyl-L-ornithine from L-glutamate: step 2/4. Catalyzes the ATP-dependent phosphorylation of N-acetyl-L-glutamate. The sequence is that of Acetylglutamate kinase from Listeria monocytogenes serotype 4b (strain CLIP80459).